The primary structure comprises 774 residues: MAEELKRSIPLLPLRGLLVYPTMVLHLDVGRDKSVQALEQAMMHDHMIFLATQQDISIDEPGEDEIFTVGTYTKIKQMLKLPNGTIRVLVEGLKRAHIVKYNEHEDYTSVDIQLIHEDDSKDTEDEALMRTLLDHFDQYIKISKKISAETYAAVTDIEEPGRMADIVASHLPLKLKDKQDILETADVKDRLNKVIDFINNEKEVLEIEKKIGQRVKRSMERTQKEYYLREQMKAIQKELGDKEGKTGEVQTLTEKIEEAGMPDHVKETALKELNRYEKIPSSSAESSVIRNYIDWLVALPWTDETDDKLDLKEAGRLLDEEHHGLEKVKERILEYLAVQKLTKSLKGPILCLAGPPGVGKTSLAKSIAKSLGRKFVRISLGGVRDESEIRGHRRTYVGAMPGRIIQGMKKAGKLNPVFLLDEIDKMSSDFRGDPSSAMLEVLDPEQNSSFSDHYIEETFDLSKVLFIATANNLATIPGPLRDRMEIINIAGYTEIEKLEIVKDHLLPKQIKEHGLKKSNLQLRDQAILDIIRYYTREAGVRSLERQLAAICRKAAKAIVAEERKRITVTEKNLQDFIGKRIFRYGQAETEDQVGVVTGLAYTTVGGDTLSIEVSLSPGKGKLILTGKLGDVMRESAQAAFSYVRSKTEELGIEPDFHEKYDIHIHVPEGAVPKDGPSAGITMATALVSALTGRAVSREVGMTGEITLRGRVLPIGGLKEKALGAHRAGLTTIIAPKDNEKDIEDIPESVREGLTFILASHLDEVLEHALVGEKK.

In terms of domain architecture, Lon N-terminal spans 9-202 (IPLLPLRGLL…KVIDFINNEK (194 aa)). Residue 354–361 (GPPGVGKT) participates in ATP binding. The Lon proteolytic domain maps to 590–771 (EDQVGVVTGL…DEVLEHALVG (182 aa)). Residues S677 and K720 contribute to the active site.

This sequence belongs to the peptidase S16 family. Homohexamer. Organized in a ring with a central cavity. Exists as a mixture of small oligomeric species in solution.

It localises to the cytoplasm. The catalysed reaction is Hydrolysis of proteins in presence of ATP.. Functionally, ATP-dependent serine protease that mediates the selective degradation of mutant and abnormal proteins as well as certain short-lived regulatory proteins. Required for cellular homeostasis and for survival from DNA damage and developmental changes induced by stress. Degrades polypeptides processively to yield small peptide fragments that are 5 to 10 amino acids long. Binds to DNA in a double-stranded, site-specific manner. Has been implicated in preventing sigma(G) activity under non-sporulation conditions. The sequence is that of Lon protease 1 from Bacillus subtilis (strain 168).